The chain runs to 295 residues: Alpha-soluble NSF attachment protein (295 aa).

N-acetylmethionine is present on methionine 1. A phosphoserine mark is found at serine 26, serine 29, and serine 195.

This sequence belongs to the SNAP family. Interacts with PRKCABP, and disrupts the interaction between GRIA2 and PRKCABP, leading to the internalization of GRIA2. Found in a complex with VAMP8. Component of a SNARE-like complex that contains at least ZW10, USE1L, RINT1, STX18 and NAPA/SNAP-alpha. Interacts with VTI1A. Interacts with STX12. Interacts with GNA12 (via N-terminus); the interaction promotes CDH5 localization to plasma membrane.

It localises to the cell membrane. Functionally, required for vesicular transport between the endoplasmic reticulum and the Golgi apparatus. Together with GNA12 promotes CDH5 localization to plasma membrane. This Mus musculus (Mouse) protein is Alpha-soluble NSF attachment protein (Napa).